The primary structure comprises 233 residues: Large ribosomal subunit protein uL1 (233 aa).

The protein belongs to the universal ribosomal protein uL1 family. Part of the 50S ribosomal subunit.

Its function is as follows. Binds directly to 23S rRNA. The L1 stalk is quite mobile in the ribosome, and is involved in E site tRNA release. Protein L1 is also a translational repressor protein, it controls the translation of the L11 operon by binding to its mRNA. This is Large ribosomal subunit protein uL1 from Shewanella sediminis (strain HAW-EB3).